A 272-amino-acid polypeptide reads, in one-letter code: NAD kinase (272 aa).

D50 (proton acceptor) is an active-site residue. NAD(+)-binding positions include 50 to 51 (DG), 126 to 127 (NE), R152, D154, 165 to 170 (TAYNKS), and A189.

Belongs to the NAD kinase family. A divalent metal cation is required as a cofactor.

The protein resides in the cytoplasm. The enzyme catalyses NAD(+) + ATP = ADP + NADP(+) + H(+). Its function is as follows. Involved in the regulation of the intracellular balance of NAD and NADP, and is a key enzyme in the biosynthesis of NADP. Catalyzes specifically the phosphorylation on 2'-hydroxyl of the adenosine moiety of NAD to yield NADP. This Streptococcus pneumoniae (strain 70585) protein is NAD kinase.